The primary structure comprises 1228 residues: Structural maintenance of chromosomes protein 1 (1228 aa).

32–39 (GPNGAGKS) contacts ATP. Positions 197-510 (NKKRGINAEL…ESKQDAKKRE (314 aa)) form a coiled coil. The SMC hinge domain maps to 522 to 635 (VKGRIIDLCT…CDSMTVARDL (114 aa)). Coiled coils occupy residues 710–783 (KLHS…KIFS), 814–926 (EFTK…EIDR), and 984–1068 (VEVD…KRLQ).

Belongs to the SMC family. SMC1 subfamily. Cohesin complexes are composed of the psm1/smc1 and psm3/smc3 heterodimer attached via their SMC hinge domain, rad21/scc1 which link them, and psc3/scc3, which interacts with rad21.

Its subcellular location is the nucleus. It is found in the chromosome. Its function is as follows. Involved in chromosome cohesion during cell cycle and in DNA repair. Central component of cohesin complex. The cohesin complex is required for the cohesion of sister chromatids after DNA replication. The cohesin complex apparently forms a large proteinaceous ring within which sister chromatids can be trapped. At anaphase, the complex is cleaved and dissociates from chromatin, allowing sister chromatids to segregate. The protein is Structural maintenance of chromosomes protein 1 (psm1) of Schizosaccharomyces pombe (strain 972 / ATCC 24843) (Fission yeast).